Consider the following 906-residue polypeptide: Ribonucleoside-diphosphate reductase large subunit-like protein (906 aa).

2 disordered regions span residues 1-70 (MNPA…AGNT) and 89-129 (VSWR…LSTF). Polar residues predominate over residues 98-109 (PDGTPSVLSLTR).

It belongs to the ribonucleoside diphosphate reductase large chain family.

It is found in the virion. Its subcellular location is the host cytoplasm. Does not possess a ribonucleotide reductase activity. Betaherpesviruses probably use another strategy to expand the dNTP pool in a quiescent host cell. The polypeptide is Ribonucleoside-diphosphate reductase large subunit-like protein (Homo sapiens (Human)).